Consider the following 213-residue polypeptide: A-type ATP synthase subunit D (213 aa).

The protein belongs to the V-ATPase D subunit family. Has multiple subunits with at least A(3), B(3), C, D, E, F, H, I and proteolipid K(x).

The protein localises to the cell membrane. Its function is as follows. Component of the A-type ATP synthase that produces ATP from ADP in the presence of a proton gradient across the membrane. The polypeptide is A-type ATP synthase subunit D (Thermoplasma acidophilum (strain ATCC 25905 / DSM 1728 / JCM 9062 / NBRC 15155 / AMRC-C165)).